We begin with the raw amino-acid sequence, 501 residues long: Ell-associated factor Eaf (501 aa).

Polar residues-rich tracts occupy residues 138 to 149 and 173 to 192; these read NMGQGQLHSQGA and ENST…SRRN. Disordered stretches follow at residues 138 to 226 and 256 to 501; these read NMGQ…PAWD and GHAN…DDDD. Low complexity-rich tracts occupy residues 200–221 and 256–270; these read RNSP…SPQS and GHAN…SATG. A Phosphoserine modification is found at Ser-202. Over residues 271–283 the composition is skewed to polar residues; sequence QTDFGSISSSSHI. 2 stretches are compositionally biased toward low complexity: residues 302-314 and 329-343; these read QRQS…QQQP and QQQR…QRPP. Positions 393–408 are enriched in acidic residues; sequence DSSDSDSGSDSDDSTE. Composition is skewed to low complexity over residues 416–437, 455–471, and 483–501; these read QQPV…HLNQ, QQQQ…QKQQ, and NDLL…DDDD.

This sequence belongs to the EAF family.

Its subcellular location is the nucleus. Promotes transcriptional elongation by Su(Tpl)/ELL. Essential for development. This Drosophila yakuba (Fruit fly) protein is Ell-associated factor Eaf.